The primary structure comprises 230 residues: Ureidoacrylate amidohydrolase RutB (230 aa).

The active-site Proton acceptor is aspartate 24. Residue lysine 133 is part of the active site. Residue cysteine 166 is the Nucleophile of the active site.

The protein belongs to the isochorismatase family. RutB subfamily.

The enzyme catalyses (Z)-3-ureidoacrylate + H2O + H(+) = (Z)-3-aminoacrylate + NH4(+) + CO2. It carries out the reaction (Z)-3-ureidoacrylate + H2O = (Z)-3-aminoacrylate + carbamate + H(+). It catalyses the reaction (Z)-2-methylureidoacrylate + H2O + H(+) = (Z)-2-methylaminoacrylate + NH4(+) + CO2. Its function is as follows. Hydrolyzes ureidoacrylate to form aminoacrylate and carbamate. The carbamate hydrolyzes spontaneously, thereby releasing one of the nitrogen atoms of the pyrimidine ring as ammonia and one of its carbon atoms as CO2. The protein is Ureidoacrylate amidohydrolase RutB of Escherichia coli O103:H2 (strain 12009 / EHEC).